The following is a 198-amino-acid chain: GTP-binding protein RHO1 (198 aa).

16 to 23 (GDGACGKT) is a GTP binding site. Positions 38 to 46 (YVPTVFENY) match the Effector region motif. Residues 63 to 67 (DTAGQ) and 121 to 124 (CKSD) contribute to the GTP site. A Cysteine methyl ester modification is found at Cys195. Cys195 carries the S-geranylgeranyl cysteine lipid modification. A propeptide spans 196–198 (VVL) (removed in mature form).

It belongs to the small GTPase superfamily. Rho family.

The protein localises to the cell membrane. This is GTP-binding protein RHO1 (RHO1) from Candida albicans (strain SC5314 / ATCC MYA-2876) (Yeast).